Reading from the N-terminus, the 185-residue chain is Photosystem I assembly protein Ycf4 (185 aa).

Helical transmembrane passes span 24–44 (YIIGGMLTIGGIGFLLASISS) and 66–86 (IIMGAYGVIANLLNFYLWYLV).

Belongs to the Ycf4 family.

It is found in the cellular thylakoid membrane. In terms of biological role, seems to be required for the assembly of the photosystem I complex. The protein is Photosystem I assembly protein Ycf4 of Prochlorococcus marinus (strain AS9601).